The following is a 797-amino-acid chain: MELLRSNLSRVQIPEPTHRIYKHECCISFDTPRSEGGLFVDMNSFLAFGKDYVSWNYEKTGNPVYLHIKQTRKSIPEDRPLKKPTLLAIGVDGGFDNNEPEYEESYSIVILPDFVSLPFPSVELPEKVRIAVDTVVNAVGAERKEQVAAWTAEKKLISEHALTLQQIKSGIVIPPSGWKCSKCDKTENLWLNLTDGMILCGRKNWDGTGGNNHAVEHYKETAYPLAVKLGTITADLEAADVYSYPEDDSVLDPLLAEHLAHFGIDFSSMQKTEMTTAERELDQNTNFDWNRIQESGKELVPVFGPGYTGLVNLGNSCYLAATMQIVFSTHSFISRYFSHQSLKMAFEMAPADPTLDLNMQLTKLGHGLLSGKYSMPATQKDATTGDPRQEGIPPRMFKNVIAASHAEFSSMRQQDALDFFLHLVGKVERASNTTPDLDPSRSFKFGIEEKILCPSGKVGYNKREDCILSLNIPLHEATNKDELEAFHKQKAGKGLEENDMRSSDEIVRPRVPLEACLANFASSEPIEDYYSSALKGMTTAIKTTGLTSFPDYLVLHMRKFVMEEGWVPKKLDVYIDVPDVIDISHMRSKGLQPGEELLPDGVPEEVMESAQPVANEEIVAQLVSMGFSQLHCQKAAINTSNAGVEEAMNWLLSHMDDPDIDAPISHQTSDIDQSSVDTLLSFGFAEDVARKALKASGGDIEKATDWVFNNPNASVSDMDVSSSNSAQTPAQSGLPDGGGKYKLFGIVSHMGTSVHCGHYVAHILKEGRWVIFNDDKVGISTDPPKDMGYVYFFQRLD.

The segment at 156–266 adopts a UBP-type; degenerate zinc-finger fold; sequence LISEHALTLQ…EHLAHFGIDF (111 aa). Cys180, Cys183, Cys200, and His213 together coordinate Zn(2+). The region spanning 308-796 is the USP domain; it reads TGLVNLGNSC…MGYVYFFQRL (489 aa). Catalysis depends on Cys317, which acts as the Nucleophile. UBA domains lie at 613–654 and 670–710; these read VANE…LLSH and DIDQ…VFNN. His758 acts as the Proton acceptor in catalysis.

It belongs to the peptidase C19 family. As to expression, constitutively and ubiquitously expressed (at protein level).

It carries out the reaction Thiol-dependent hydrolysis of ester, thioester, amide, peptide and isopeptide bonds formed by the C-terminal Gly of ubiquitin (a 76-residue protein attached to proteins as an intracellular targeting signal).. Functionally, recognizes and hydrolyzes the peptide bond at the C-terminal Gly of ubiquitin. Involved in the processing of poly-ubiquitin precursors as well as that of ubiquitinated proteins. Involved in seed and embryo development. This Arabidopsis thaliana (Mouse-ear cress) protein is Ubiquitin carboxyl-terminal hydrolase 14 (UBP14).